The following is a 367-amino-acid chain: 3-isopropylmalate dehydrogenase (367 aa).

77–90 is an NAD(+) binding site; the sequence is GPKWDAVPYEVRPE. Substrate is bound by residues Arg97, Arg107, Arg135, and Asp226. Residues Asp226, Asp250, and Asp254 each contribute to the Mg(2+) site. 290-302 contacts NAD(+); that stretch reads GSAPDIAGKGIAN.

It belongs to the isocitrate and isopropylmalate dehydrogenases family. LeuB type 1 subfamily. Homodimer. The cofactor is Mg(2+). Mn(2+) serves as cofactor.

It localises to the cytoplasm. It catalyses the reaction (2R,3S)-3-isopropylmalate + NAD(+) = 4-methyl-2-oxopentanoate + CO2 + NADH. It functions in the pathway amino-acid biosynthesis; L-leucine biosynthesis; L-leucine from 3-methyl-2-oxobutanoate: step 3/4. Catalyzes the oxidation of 3-carboxy-2-hydroxy-4-methylpentanoate (3-isopropylmalate) to 3-carboxy-4-methyl-2-oxopentanoate. The product decarboxylates to 4-methyl-2 oxopentanoate. This chain is 3-isopropylmalate dehydrogenase, found in Mesorhizobium japonicum (strain LMG 29417 / CECT 9101 / MAFF 303099) (Mesorhizobium loti (strain MAFF 303099)).